The primary structure comprises 105 residues: Large ribosomal subunit protein uL18c (105 aa).

It belongs to the universal ribosomal protein uL18 family. Part of the 50S ribosomal subunit; contacts the 5S rRNA.

The protein localises to the plastid. It localises to the chloroplast. Binds 5S rRNA, forms part of the central protuberance of the 50S subunit. This is Large ribosomal subunit protein uL18c (rpl18) from Cyanidium caldarium (Red alga).